Reading from the N-terminus, the 295-residue chain is Ribosomal RNA small subunit methyltransferase A (295 aa).

The S-adenosyl-L-methionine site is built by Asn33, Val35, Gly60, Glu81, Asp111, and Asn129.

It belongs to the class I-like SAM-binding methyltransferase superfamily. rRNA adenine N(6)-methyltransferase family. RsmA subfamily.

Its subcellular location is the cytoplasm. It catalyses the reaction adenosine(1518)/adenosine(1519) in 16S rRNA + 4 S-adenosyl-L-methionine = N(6)-dimethyladenosine(1518)/N(6)-dimethyladenosine(1519) in 16S rRNA + 4 S-adenosyl-L-homocysteine + 4 H(+). Functionally, specifically dimethylates two adjacent adenosines (A1518 and A1519) in the loop of a conserved hairpin near the 3'-end of 16S rRNA in the 30S particle. May play a critical role in biogenesis of 30S subunits. This Streptomyces avermitilis (strain ATCC 31267 / DSM 46492 / JCM 5070 / NBRC 14893 / NCIMB 12804 / NRRL 8165 / MA-4680) protein is Ribosomal RNA small subunit methyltransferase A.